Reading from the N-terminus, the 419-residue chain is Putative zinc metalloprotease SP_0263 (419 aa).

His-18 contributes to the Zn(2+) binding site. Glu-19 is a catalytic residue. His-22 contacts Zn(2+). The next 3 membrane-spanning stretches (helical) occupy residues 169–191 (LITN…WVLI), 345–367 (ILYF…IPAL), and 388–410 (EIET…AVTW).

Belongs to the peptidase M50B family. Requires Zn(2+) as cofactor.

The protein resides in the cell membrane. This is Putative zinc metalloprotease SP_0263 from Streptococcus pneumoniae serotype 4 (strain ATCC BAA-334 / TIGR4).